Consider the following 322-residue polypeptide: Ubiquitin-conjugating enzyme E2 U (322 aa).

The region spanning arginine 4–methionine 153 is the UBC core domain. The Glycyl thioester intermediate role is filled by cysteine 89.

Belongs to the ubiquitin-conjugating enzyme family. Autoubiquitinated in vitro in the presence of UBR5.

It catalyses the reaction S-ubiquitinyl-[E1 ubiquitin-activating enzyme]-L-cysteine + [E2 ubiquitin-conjugating enzyme]-L-cysteine = [E1 ubiquitin-activating enzyme]-L-cysteine + S-ubiquitinyl-[E2 ubiquitin-conjugating enzyme]-L-cysteine.. It participates in protein modification; protein ubiquitination. In terms of biological role, catalyzes the covalent attachment of ubiquitin to other proteins. This is Ubiquitin-conjugating enzyme E2 U (UBE2U) from Macaca fascicularis (Crab-eating macaque).